The sequence spans 232 residues: Ashwin (232 aa).

S112, S182, S184, S189, and S193 each carry phosphoserine. Residues 163 to 232 (KMEHNNNDTQ…KRKIQHVTWP (70 aa)) are disordered. A phosphothreonine mark is found at T197 and T198. Basic and acidic residues predominate over residues 206 to 224 (APKEEAEATNHLKPPEVKR).

Belongs to the ashwin family. In terms of assembly, component of the tRNA-splicing ligase complex.

It localises to the nucleus. This Mus musculus (Mouse) protein is Ashwin.